The sequence spans 354 residues: Uroporphyrinogen decarboxylase (354 aa).

Substrate contacts are provided by residues 27–31, Asp-77, Tyr-154, Ser-209, and His-327; that span reads RQAGR.

Belongs to the uroporphyrinogen decarboxylase family. As to quaternary structure, homodimer.

It localises to the cytoplasm. The catalysed reaction is uroporphyrinogen III + 4 H(+) = coproporphyrinogen III + 4 CO2. The protein operates within porphyrin-containing compound metabolism; protoporphyrin-IX biosynthesis; coproporphyrinogen-III from 5-aminolevulinate: step 4/4. Functionally, catalyzes the decarboxylation of four acetate groups of uroporphyrinogen-III to yield coproporphyrinogen-III. This Teredinibacter turnerae (strain ATCC 39867 / T7901) protein is Uroporphyrinogen decarboxylase.